The primary structure comprises 124 residues: Urease subunit beta (124 aa).

This sequence belongs to the urease beta subunit family. As to quaternary structure, heterotrimer of UreA (gamma), UreB (beta) and UreC (alpha) subunits. Three heterotrimers associate to form the active enzyme.

Its subcellular location is the cytoplasm. It carries out the reaction urea + 2 H2O + H(+) = hydrogencarbonate + 2 NH4(+). It participates in nitrogen metabolism; urea degradation; CO(2) and NH(3) from urea (urease route): step 1/1. This chain is Urease subunit beta, found in Bacillus velezensis (strain DSM 23117 / BGSC 10A6 / LMG 26770 / FZB42) (Bacillus amyloliquefaciens subsp. plantarum).